A 462-amino-acid polypeptide reads, in one-letter code: FAD-dependent monooxygenase opaC (462 aa).

N10 is a glycosylation site (N-linked (GlcNAc...) asparagine). Residues I14–L34 traverse the membrane as a helical segment. D43 serves as a coordination point for FAD. The N-linked (GlcNAc...) asparagine glycan is linked to N60. R115 lines the FAD pocket. The active site involves R193. D322 and A335 together coordinate FAD.

The protein belongs to the paxM FAD-dependent monooxygenase family. It depends on FAD as a cofactor.

Its subcellular location is the membrane. It functions in the pathway secondary metabolite biosynthesis. Its function is as follows. FAD-dependent monooxygenase; part of the gene cluster that mediates the biosynthesis of oxepinamides, derivatives of anthranilyl-containing tripeptides that share an oxepin ring and a fused pyrimidinone moiety. The nonribosomal peptide synthetase (NRPS) opaA assembles the quinazolinone core with D-Phe incorporation. The first adenylation domain (A1) of opaA loads and activates anthranilic acid whereas the second A domain (A2) is for activating of L-Phe, which is then converted to D-form by the E domain. The third A domain (A3) is responsible for L-Ile activation and the terminal condensation domain C3 for cyclization and releasing the NRPS product protuboxepin K. The cytochrome P450 monooxygenase opaB then catalyzes alone the oxepin ring formation to convert protuboxepin K into protuboxepin A. The flavoenzyme opaC installs subsequently one hydroxyl group at the oxepin ring, accompanied by double bond migration, to form 15-epi-oxepinamide E. The epimerase opaE changes the D-Phe residue back to L-form, leading to oxepinamide E, which is further methylated at the hydroxyl group at C-12 by the O-methyltransferase OpaF to yield oxepinamide F. The sequence is that of FAD-dependent monooxygenase opaC from Aspergillus ustus.